We begin with the raw amino-acid sequence, 591 residues long: V-type ATP synthase alpha chain (591 aa).

242–249 (GPFGAGKT) contributes to the ATP binding site.

This sequence belongs to the ATPase alpha/beta chains family.

The enzyme catalyses ATP + H2O + 4 H(+)(in) = ADP + phosphate + 5 H(+)(out). Produces ATP from ADP in the presence of a proton gradient across the membrane. The V-type alpha chain is a catalytic subunit. The protein is V-type ATP synthase alpha chain of Chlamydia caviae (strain ATCC VR-813 / DSM 19441 / 03DC25 / GPIC) (Chlamydophila caviae).